Reading from the N-terminus, the 305-residue chain is tRNA dimethylallyltransferase 1 (305 aa).

10–17 (GPTASGKS) provides a ligand contact to ATP. 12–17 (TASGKS) provides a ligand contact to substrate. Residues 35-38 (DSLT) are interaction with substrate tRNA.

This sequence belongs to the IPP transferase family. Monomer. Requires Mg(2+) as cofactor.

The catalysed reaction is adenosine(37) in tRNA + dimethylallyl diphosphate = N(6)-dimethylallyladenosine(37) in tRNA + diphosphate. Functionally, catalyzes the transfer of a dimethylallyl group onto the adenine at position 37 in tRNAs that read codons beginning with uridine, leading to the formation of N6-(dimethylallyl)adenosine (i(6)A). This Trichlorobacter lovleyi (strain ATCC BAA-1151 / DSM 17278 / SZ) (Geobacter lovleyi) protein is tRNA dimethylallyltransferase 1.